The chain runs to 423 residues: Glucose-1-phosphate adenylyltransferase (423 aa).

Alpha-D-glucose 1-phosphate-binding positions include Tyr-110, Gly-175, 190 to 191, and Ser-208; that span reads EK.

The protein belongs to the bacterial/plant glucose-1-phosphate adenylyltransferase family. As to quaternary structure, homotetramer.

The enzyme catalyses alpha-D-glucose 1-phosphate + ATP + H(+) = ADP-alpha-D-glucose + diphosphate. Its pathway is glycan biosynthesis; glycogen biosynthesis. Functionally, involved in the biosynthesis of ADP-glucose, a building block required for the elongation reactions to produce glycogen. Catalyzes the reaction between ATP and alpha-D-glucose 1-phosphate (G1P) to produce pyrophosphate and ADP-Glc. The polypeptide is Glucose-1-phosphate adenylyltransferase (Nitrosococcus oceani (strain ATCC 19707 / BCRC 17464 / JCM 30415 / NCIMB 11848 / C-107)).